The sequence spans 392 residues: NADH dehydrogenase-like protein YjlD (392 aa).

Belongs to the NADH dehydrogenase family. The cofactor is FAD.

In Bacillus subtilis (strain 168), this protein is NADH dehydrogenase-like protein YjlD (yjlD).